A 113-amino-acid chain; its full sequence is U11-theraphotoxin-Hhn1h (113 aa).

The N-terminal stretch at 1-21 (MNTVRVTFLLVFVLVVSLGQA) is a signal peptide. Residues 22-74 (DKDENRMEMQEKTEQGKSYLDFAENLLLQKLEELEAKLLEEDSEESRNSRQKR) constitute a propeptide that is removed on maturation. The segment at 61–83 (EEDSEESRNSRQKRRIGEGVPCD) is disordered. 2 disulfide bridges follow: C82–C95 and C89–C110.

This sequence belongs to the neurotoxin 14 (magi-1) family. 01 (HNTX-16) subfamily. In terms of tissue distribution, expressed by the venom gland.

It localises to the secreted. Functionally, probable ion channel inhibitor. The polypeptide is U11-theraphotoxin-Hhn1h (Cyriopagopus hainanus (Chinese bird spider)).